We begin with the raw amino-acid sequence, 338 residues long: Cinnamoyl-CoA reductase 1 (338 aa).

Residues 22-28 (GAGGFIG), Arg47, Lys53, 73-74 (DV), 93-95 (VAS), Tyr165, Lys169, 192-195 (PSMT), and Ser207 contribute to the NADP(+) site. Residues Cys158 and Cys166 are joined by a disulfide bond. The active-site Proton donor is the Lys169.

It belongs to the NAD(P)-dependent epimerase/dehydratase family. Dihydroflavonol-4-reductase subfamily. In terms of assembly, interacts with RAC1 in a GTP-dependent manner.

The protein localises to the cytoplasm. It carries out the reaction (E)-cinnamaldehyde + NADP(+) + CoA = (E)-cinnamoyl-CoA + NADPH + H(+). The protein operates within aromatic compound metabolism; phenylpropanoid biosynthesis. Activated by the small GTPase RAC1. Functionally, involved in the latter stages of lignin biosynthesis. Catalyzes one of the last steps of monolignol biosynthesis, the conversion of cinnamoyl-CoAs into their corresponding cinnamaldehydes. Probably involved in the formation of lignin in defense responses. In Oryza sativa subsp. japonica (Rice), this protein is Cinnamoyl-CoA reductase 1.